A 161-amino-acid chain; its full sequence is Glycine cleavage system H protein 2 (161 aa).

The Lipoyl-binding domain maps to 34–116 (TVTVGVTDIG…YGEGWIAKLK (83 aa)). Lysine 75 is modified (N6-lipoyllysine).

It belongs to the GcvH family. The glycine cleavage system is composed of four proteins: P, T, L and H. (R)-lipoate is required as a cofactor.

The glycine cleavage system catalyzes the degradation of glycine. The H protein shuttles the methylamine group of glycine from the P protein to the T protein. In Aquifex aeolicus (strain VF5), this protein is Glycine cleavage system H protein 2.